Here is a 121-residue protein sequence, read N- to C-terminus: Pancreatic progenitor cell differentiation and proliferation factor (121 aa).

Disordered stretches follow at residues glycine 22–glutamine 47 and serine 101–serine 121. A compositionally biased stretch (low complexity) spans serine 23–serine 33. Polar residues predominate over residues serine 101–serine 110.

Belongs to the PPDPF family.

Functionally, probable regulator of exocrine pancreas development. This is Pancreatic progenitor cell differentiation and proliferation factor (ppdpf) from Salmo salar (Atlantic salmon).